The primary structure comprises 1169 residues: Rabankyrin-5 (1169 aa).

The residue at position 2 (Ala-2) is an N-acetylalanine. The BTB domain occupies 68 to 130 (SDLKIKVGDR…IYTDELEFRE (63 aa)). 5 ANK repeats span residues 217–247 (KTEYPLHKAIKVEREDVVFLYLIEMDSQLPG), 255–284 (NGDLALDLALSRRLESIATTLVSHKADVDM), 288–317 (NGWSLLHKGIQRGDLFASTFLIKNGALVNA), 322–362 (AQET…NPNM), and 366–396 (KGRTPLHLSIMARNDCVFSQLLQCKQLDLEL). Ser-270 bears the Phosphoserine mark. The NPF motif lies at 421–423 (NPF). ANK repeat units lie at residues 490-519 (WGETPLHTACRHGLANLTAELLQQGANPNL), 542-572 (YLQTPLHMAIAYNHPDVVSVILEQKANALHA), 588-617 (RDQTVLGLALWTGMHTIAAQLLGSGASIND), 621-650 (DGQTLLHMAIQRQDSKSALFLLEHQADINV), 654-683 (DGETALQLAIKHQLPLVVDAICTRGADMSV), 687-716 (KGNPPLWLALASNLEDIASTLVRHGCDATC), 724-753 (CLQTLLHRAVDENNESTACFLIRSGCDVNS), 769-798 (DGQTPLHLAASWGLEETVQCLLEFGANVNA), 802-832 (EGRTPVHVAISNQHSVIIQLLISHPNIELSV), 836-865 (QGLTPFACAMTYKNNKAAEAILKRESGAAE), 870-899 (KGRNFLHVAVQNSDIESVLFLISVQANVNS), 905-934 (SKLTPLHLAVQAGSEIIVRNLLLAGAKVNE), 938-967 (HRQTALHLAAQQDLPTICSVLLENGVDFAA), 971-1001 (NGNNALHLAVMHGRLNNIRALLTECTVDAEA), 1005-1037 (RGQSPLHILGQYGKENAAAIFDLFLECMPEYPL), and 1043-1072 (EGNTVLLLAYMKGNANLCRAIVRSGVRLGV). The interaction with RHOD and RAB5A stretch occupies residues 650–759 (VRTQDGETAL…DVNSPRQPGT (110 aa)). The FYVE-type zinc-finger motif lies at 1104–1164 (WCDGSNCYEC…VCNICFDVLT (61 aa)). Zn(2+) is bound by residues Cys-1110, Cys-1113, Cys-1126, Cys-1129, Cys-1134, Cys-1137, Cys-1156, and Cys-1159.

As to quaternary structure, interacts with RAB5A (in GTP-bound form). Interacts with RHOD (independent of GTP-loaded status). Interacts with EHD1. Interacts with VPS26A; the interaction is independent of EHD1 and is indicative for an association with the cargo recognition subcomplex of the retromer complex. As to expression, expressed in kidney proximal tubule epithelial cells; at protein level.

The protein localises to the cytoplasm. It localises to the endosome membrane. It is found in the cytoplasmic vesicle. In terms of biological role, proposed effector of Rab5. Binds to phosphatidylinositol 3-phosphate (PI(3)P). Involved in homotypic early endosome fusion and to a lesser extent in heterotypic fusion of chlathrin-coated vesicles with early endosomes. Required for correct endosomal localization. Involved in the internalization and trafficking of activated tyrosine kinase receptors such as PDGFRB. Regulates the subcellular localization of the retromer complex in a EHD1-dependent manner. Involved in endosome-to-Golgi transport and biosynthetic transport to late endosomes and lysosomes indicative for a regulation of retromer complex-mediated retrograde transport. Involved in macropinocytosis; the function is dependent on Rab5-GTP. This chain is Rabankyrin-5 (Ankfy1), found in Mus musculus (Mouse).